We begin with the raw amino-acid sequence, 199 residues long: RNA-free ribonuclease P (199 aa).

It belongs to the HARP family.

It catalyses the reaction Endonucleolytic cleavage of RNA, removing 5'-extranucleotides from tRNA precursor.. Its function is as follows. RNA-free RNase P that catalyzes the removal of the 5'-leader sequence from pre-tRNA to produce the mature 5'-terminus. This chain is RNA-free ribonuclease P, found in Pyrococcus furiosus (strain ATCC 43587 / DSM 3638 / JCM 8422 / Vc1).